Consider the following 363-residue polypeptide: Chorismate synthase (363 aa).

Arg47 and Arg53 together coordinate NADP(+). FMN-binding positions include 124–126 (RSS), Gly286, 301–305 (KPTAT), and Arg327.

This sequence belongs to the chorismate synthase family. In terms of assembly, homotetramer. FMNH2 serves as cofactor.

It carries out the reaction 5-O-(1-carboxyvinyl)-3-phosphoshikimate = chorismate + phosphate. It functions in the pathway metabolic intermediate biosynthesis; chorismate biosynthesis; chorismate from D-erythrose 4-phosphate and phosphoenolpyruvate: step 7/7. In terms of biological role, catalyzes the anti-1,4-elimination of the C-3 phosphate and the C-6 proR hydrogen from 5-enolpyruvylshikimate-3-phosphate (EPSP) to yield chorismate, which is the branch point compound that serves as the starting substrate for the three terminal pathways of aromatic amino acid biosynthesis. This reaction introduces a second double bond into the aromatic ring system. The sequence is that of Chorismate synthase from Thermosynechococcus vestitus (strain NIES-2133 / IAM M-273 / BP-1).